The following is a 94-amino-acid chain: Phosphoribosyl-ATP pyrophosphatase (94 aa).

This sequence belongs to the PRA-PH family.

It is found in the cytoplasm. It catalyses the reaction 1-(5-phospho-beta-D-ribosyl)-ATP + H2O = 1-(5-phospho-beta-D-ribosyl)-5'-AMP + diphosphate + H(+). It functions in the pathway amino-acid biosynthesis; L-histidine biosynthesis; L-histidine from 5-phospho-alpha-D-ribose 1-diphosphate: step 2/9. This chain is Phosphoribosyl-ATP pyrophosphatase (hisE), found in Pyrobaculum aerophilum (strain ATCC 51768 / DSM 7523 / JCM 9630 / CIP 104966 / NBRC 100827 / IM2).